A 252-amino-acid polypeptide reads, in one-letter code: Aspartate/glutamate leucyltransferase (252 aa).

Belongs to the R-transferase family. Bpt subfamily.

The protein resides in the cytoplasm. It carries out the reaction N-terminal L-glutamyl-[protein] + L-leucyl-tRNA(Leu) = N-terminal L-leucyl-L-glutamyl-[protein] + tRNA(Leu) + H(+). It catalyses the reaction N-terminal L-aspartyl-[protein] + L-leucyl-tRNA(Leu) = N-terminal L-leucyl-L-aspartyl-[protein] + tRNA(Leu) + H(+). Functions in the N-end rule pathway of protein degradation where it conjugates Leu from its aminoacyl-tRNA to the N-termini of proteins containing an N-terminal aspartate or glutamate. The sequence is that of Aspartate/glutamate leucyltransferase from Agrobacterium fabrum (strain C58 / ATCC 33970) (Agrobacterium tumefaciens (strain C58)).